Reading from the N-terminus, the 180-residue chain is ATP-dependent protease subunit HslV (180 aa).

Thr-5 is a catalytic residue. Residues Gly-165, Cys-168, and Thr-171 each contribute to the Na(+) site.

This sequence belongs to the peptidase T1B family. HslV subfamily. As to quaternary structure, a double ring-shaped homohexamer of HslV is capped on each side by a ring-shaped HslU homohexamer. The assembly of the HslU/HslV complex is dependent on binding of ATP.

It is found in the cytoplasm. It catalyses the reaction ATP-dependent cleavage of peptide bonds with broad specificity.. Its activity is regulated as follows. Allosterically activated by HslU binding. Functionally, protease subunit of a proteasome-like degradation complex believed to be a general protein degrading machinery. This chain is ATP-dependent protease subunit HslV, found in Helicobacter pylori (strain J99 / ATCC 700824) (Campylobacter pylori J99).